Here is a 391-residue protein sequence, read N- to C-terminus: Inactive polyketide synthase 2 (391 aa).

Cys164 is an active-site residue.

This sequence belongs to the thiolase-like superfamily. Chalcone/stilbene synthases family. Homodimer.

This chain is Inactive polyketide synthase 2 (PKS2), found in Rubus idaeus (Raspberry).